Here is a 242-residue protein sequence, read N- to C-terminus: Ethanolamine ammonia-lyase small subunit (242 aa).

Valine 155 and glutamate 176 together coordinate adenosylcob(III)alamin.

The protein belongs to the EutC family. As to quaternary structure, the basic unit is a heterodimer which dimerizes to form tetramers. The heterotetramers trimerize; 6 large subunits form a core ring with 6 small subunits projecting outwards. The cofactor is adenosylcob(III)alamin.

The protein resides in the bacterial microcompartment. It carries out the reaction ethanolamine = acetaldehyde + NH4(+). The protein operates within amine and polyamine degradation; ethanolamine degradation. Its function is as follows. Catalyzes the deamination of various vicinal amino-alcohols to oxo compounds. Allows this organism to utilize ethanolamine as the sole source of nitrogen and carbon in the presence of external vitamin B12. The chain is Ethanolamine ammonia-lyase small subunit from Clostridium acetobutylicum (strain ATCC 824 / DSM 792 / JCM 1419 / IAM 19013 / LMG 5710 / NBRC 13948 / NRRL B-527 / VKM B-1787 / 2291 / W).